Reading from the N-terminus, the 92-residue chain is Small ribosomal subunit protein uS19 (92 aa).

This sequence belongs to the universal ribosomal protein uS19 family.

In terms of biological role, protein S19 forms a complex with S13 that binds strongly to the 16S ribosomal RNA. The polypeptide is Small ribosomal subunit protein uS19 (Photorhabdus laumondii subsp. laumondii (strain DSM 15139 / CIP 105565 / TT01) (Photorhabdus luminescens subsp. laumondii)).